Reading from the N-terminus, the 363-residue chain is Probable dual-specificity RNA methyltransferase RlmN (363 aa).

Glutamate 106 serves as the catalytic Proton acceptor. In terms of domain architecture, Radical SAM core spans 112-345 (HEYGNSVCVT…VTIRREQGHD (234 aa)). An intrachain disulfide couples cysteine 119 to cysteine 350. [4Fe-4S] cluster-binding residues include cysteine 126, cysteine 130, and cysteine 133. Residues 176–177 (GE), serine 208, 231–233 (SLH), and asparagine 307 each bind S-adenosyl-L-methionine. Catalysis depends on cysteine 350, which acts as the S-methylcysteine intermediate.

This sequence belongs to the radical SAM superfamily. RlmN family. [4Fe-4S] cluster serves as cofactor.

The protein resides in the cytoplasm. It carries out the reaction adenosine(2503) in 23S rRNA + 2 reduced [2Fe-2S]-[ferredoxin] + 2 S-adenosyl-L-methionine = 2-methyladenosine(2503) in 23S rRNA + 5'-deoxyadenosine + L-methionine + 2 oxidized [2Fe-2S]-[ferredoxin] + S-adenosyl-L-homocysteine. It catalyses the reaction adenosine(37) in tRNA + 2 reduced [2Fe-2S]-[ferredoxin] + 2 S-adenosyl-L-methionine = 2-methyladenosine(37) in tRNA + 5'-deoxyadenosine + L-methionine + 2 oxidized [2Fe-2S]-[ferredoxin] + S-adenosyl-L-homocysteine. Its function is as follows. Specifically methylates position 2 of adenine 2503 in 23S rRNA and position 2 of adenine 37 in tRNAs. The polypeptide is Probable dual-specificity RNA methyltransferase RlmN (Bacillus velezensis (strain DSM 23117 / BGSC 10A6 / LMG 26770 / FZB42) (Bacillus amyloliquefaciens subsp. plantarum)).